A 377-amino-acid polypeptide reads, in one-letter code: Metallo-hydrolase mfmC (377 aa).

Zn(2+) is bound by residues histidine 126, histidine 128, aspartate 130, histidine 131, histidine 209, and aspartate 233.

This sequence belongs to the metallo-beta-lactamase superfamily.

It functions in the pathway secondary metabolite biosynthesis; terpenoid biosynthesis. In terms of biological role, metallo-hydrolase; part of the gene cluster that mediates the biosynthesis of the phthalide-terpenoid hybrid 11'-O-desmethylfendlerol. Within the pathway, mfma and mfmC act together to convert 3,5-dimethylorsellinic acid (DMOA) into the phthalide 5,7-dihydroxy-4-(hydroxymethyl)-6-methylphthalide. The biosynthesis of 11'-O-desmethylfendlerol begins with the NR-PKS mfmB that forms 3,5-dimethylorsellinic acid (DMOA), which is then transformed into the phthalide 5,7-dihydroxy-4-(hydroxymethyl)-6-methylphthalide by the cytochrome P450 monooxygenase mfmA and the hydrolase mfmC. Subsequently, the methyltransferase mfmE catalyzes 7-O-methylation to yield 5-hydroxy-4-(hydroxymethyl)-7-methoxy-6-methylphthalide, which undergoes C-3 hydroxylation by the cytochrome P450 monooxygenase mfmF. The resultant cyclopolic acid (2,5-dihydroxy-4-(hydroxymethyl)-7-methoxy-6-methylphthalide) is then farnesylated by the DMATS-type prenyltransferase mfmD to afford 5-O-farnesylcyclopolic acid. Finally, the Pyr4-family terpene cyclase mfmH cyclizes the farnesyl moiety of 5-O-farnesylcyclopolic acid into a drimane-like structure, thus completing the biosynthesis of 11'-O-desmethylfendlerol. The polypeptide is Metallo-hydrolase mfmC (Annulohypoxylon moriforme (Filamentous fungus)).